Consider the following 472-residue polypeptide: Mothers against decapentaplegic homolog 1 (472 aa).

The MH1 domain maps to 12–136; the sequence is PAVKRLLGWK…YKRVDSPVLP (125 aa). Positions 64, 109, 121, and 126 each coordinate Zn(2+). The disordered stretch occupies residues 158 to 238; the sequence is NPLHQTEPPM…PPPAYMPPEE (81 aa). Residues 169–182 show a composition bias toward polar residues; sequence QNATFPDSFPQQPA. Over residues 188–226 the composition is skewed to low complexity; it reads TPNSPTNSYPSSPNSGTGSTATFPHSPSSSDPGSPFQMP. Residues 227–238 show a composition bias toward pro residues; the sequence is ETPPPAYMPPEE. The region spanning 278 to 472 is the MH2 domain; sequence WCSIVYYELN…SPHNPISSVS (195 aa).

The protein belongs to the dwarfin/SMAD family. May form trimers with another Smad1 and the co-Smad Smad4.

The protein localises to the cytoplasm. It localises to the nucleus. In terms of biological role, involved in ventralization. May mediate Bmp2b signaling during embryonic dorsal-ventral pattern formation, and may itself be a transcriptional target for Smad5-mediated Bmp2b signaling. The sequence is that of Mothers against decapentaplegic homolog 1 (smad1) from Danio rerio (Zebrafish).